Reading from the N-terminus, the 961-residue chain is Glycine dehydrogenase (decarboxylating) (961 aa).

Lys-709 carries the N6-(pyridoxal phosphate)lysine modification.

Belongs to the GcvP family. In terms of assembly, the glycine cleavage system is composed of four proteins: P, T, L and H. Requires pyridoxal 5'-phosphate as cofactor.

The enzyme catalyses N(6)-[(R)-lipoyl]-L-lysyl-[glycine-cleavage complex H protein] + glycine + H(+) = N(6)-[(R)-S(8)-aminomethyldihydrolipoyl]-L-lysyl-[glycine-cleavage complex H protein] + CO2. In terms of biological role, the glycine cleavage system catalyzes the degradation of glycine. The P protein binds the alpha-amino group of glycine through its pyridoxal phosphate cofactor; CO(2) is released and the remaining methylamine moiety is then transferred to the lipoamide cofactor of the H protein. The chain is Glycine dehydrogenase (decarboxylating) from Streptomyces avermitilis (strain ATCC 31267 / DSM 46492 / JCM 5070 / NBRC 14893 / NCIMB 12804 / NRRL 8165 / MA-4680).